Reading from the N-terminus, the 55-residue chain is Large ribosomal subunit protein bL33 (55 aa).

This sequence belongs to the bacterial ribosomal protein bL33 family.

This is Large ribosomal subunit protein bL33 from Xanthomonas axonopodis pv. citri (strain 306).